The primary structure comprises 134 residues: Beta-synuclein (134 aa).

2 tandem repeats follow at residues 20–30 and 31–41. A 4 X 11 AA tandem repeats of [EGS]-K-T-K-[EQ]-[GQ]-V-X(4) region spans residues 20–67; that stretch reads EKTKQGVTEAAEKTKEGVLYVGSKTREGVVQGVASVAEKTKEQASHLG. One copy of the 3; approximate repeat lies at 42-56; it reads SKTREGVVQGVASVA. Residues 57 to 67 form repeat 4; sequence EKTKEQASHLG. Residues 89–134 are disordered; that stretch reads FPTDLKPEEVAQEAAEEPLIEPLMEPEGESYEDPPQEEYQEYEPEA. Residues 98–134 are compositionally biased toward acidic residues; sequence VAQEAAEEPLIEPLMEPEGESYEDPPQEEYQEYEPEA. S118 carries the phosphoserine; by BARK1, CK2 and GRK5 modification.

Belongs to the synuclein family. Post-translationally, phosphorylated. Phosphorylation by G-protein coupled receptor kinases (GRK) is more efficient than phosphorylation by CK1, CK2 and CaM-kinase II. In terms of tissue distribution, expressed predominantly in brain; concentrated in presynaptic nerve terminals.

The protein localises to the cytoplasm. Non-amyloid component of senile plaques found in Alzheimer disease. Could act as a regulator of SNCA aggregation process. Protects neurons from staurosporine and 6-hydroxy dopamine (6OHDA)-stimulated caspase activation in a p53/TP53-dependent manner. Contributes to restore the SNCA anti-apoptotic function abolished by 6OHDA. Not found in the Lewy bodies associated with Parkinson disease. The chain is Beta-synuclein (SNCB) from Homo sapiens (Human).